The following is a 356-amino-acid chain: Dual-specificity RNA methyltransferase RlmN (356 aa).

The active-site Proton acceptor is the Glu89. The Radical SAM core domain occupies 108–341 (SHARYTICVS…CTIRESKGLD (234 aa)). A disulfide bridge connects residues Cys115 and Cys346. [4Fe-4S] cluster contacts are provided by Cys122, Cys126, and Cys129. S-adenosyl-L-methionine is bound by residues 172 to 173 (GE), Ser204, 227 to 229 (SLH), and Asn303. Cys346 functions as the S-methylcysteine intermediate in the catalytic mechanism.

Belongs to the radical SAM superfamily. RlmN family. Requires [4Fe-4S] cluster as cofactor.

Its subcellular location is the cytoplasm. The enzyme catalyses adenosine(2503) in 23S rRNA + 2 reduced [2Fe-2S]-[ferredoxin] + 2 S-adenosyl-L-methionine = 2-methyladenosine(2503) in 23S rRNA + 5'-deoxyadenosine + L-methionine + 2 oxidized [2Fe-2S]-[ferredoxin] + S-adenosyl-L-homocysteine. It carries out the reaction adenosine(37) in tRNA + 2 reduced [2Fe-2S]-[ferredoxin] + 2 S-adenosyl-L-methionine = 2-methyladenosine(37) in tRNA + 5'-deoxyadenosine + L-methionine + 2 oxidized [2Fe-2S]-[ferredoxin] + S-adenosyl-L-homocysteine. Specifically methylates position 2 of adenine 2503 in 23S rRNA and position 2 of adenine 37 in tRNAs. m2A2503 modification seems to play a crucial role in the proofreading step occurring at the peptidyl transferase center and thus would serve to optimize ribosomal fidelity. This chain is Dual-specificity RNA methyltransferase RlmN, found in Campylobacter jejuni (strain RM1221).